Reading from the N-terminus, the 579-residue chain is Aspartate--tRNA(Asp/Asn) ligase (579 aa).

Glu-171 provides a ligand contact to L-aspartate. An aspartate region spans residues 195–198 (QLFK). Arg-217 contributes to the L-aspartate binding site. Residues 217–219 (RDE) and Gln-226 each bind ATP. His-444 serves as a coordination point for L-aspartate. Glu-475 provides a ligand contact to ATP. Residue Arg-482 coordinates L-aspartate. 527–530 (GLDR) provides a ligand contact to ATP.

The protein belongs to the class-II aminoacyl-tRNA synthetase family. Type 1 subfamily. As to quaternary structure, homodimer.

It localises to the cytoplasm. It carries out the reaction tRNA(Asx) + L-aspartate + ATP = L-aspartyl-tRNA(Asx) + AMP + diphosphate. Its function is as follows. Aspartyl-tRNA synthetase with relaxed tRNA specificity since it is able to aspartylate not only its cognate tRNA(Asp) but also tRNA(Asn). Reaction proceeds in two steps: L-aspartate is first activated by ATP to form Asp-AMP and then transferred to the acceptor end of tRNA(Asp/Asn). This is Aspartate--tRNA(Asp/Asn) ligase from Thermotoga neapolitana (strain ATCC 49049 / DSM 4359 / NBRC 107923 / NS-E).